Consider the following 270-residue polypeptide: uncharacterized protein (270 aa).

Residues 1–22 (MEYIKKLLCTMSVLLLIIFIGG) form the signal peptide. Cys-23 carries N-palmitoyl cysteine lipidation. Residue Cys-23 is the site of S-diacylglycerol cysteine attachment.

Belongs to the staphylococcal tandem lipoprotein family.

It localises to the cell membrane. This is an uncharacterized protein from Staphylococcus aureus (strain bovine RF122 / ET3-1).